A 383-amino-acid chain; its full sequence is ATP phosphoribosyltransferase regulatory subunit (383 aa).

The protein belongs to the class-II aminoacyl-tRNA synthetase family. HisZ subfamily. As to quaternary structure, heteromultimer composed of HisG and HisZ subunits.

Its subcellular location is the cytoplasm. Its pathway is amino-acid biosynthesis; L-histidine biosynthesis; L-histidine from 5-phospho-alpha-D-ribose 1-diphosphate: step 1/9. Functionally, required for the first step of histidine biosynthesis. May allow the feedback regulation of ATP phosphoribosyltransferase activity by histidine. This chain is ATP phosphoribosyltransferase regulatory subunit, found in Paraburkholderia phymatum (strain DSM 17167 / CIP 108236 / LMG 21445 / STM815) (Burkholderia phymatum).